Here is a 105-residue protein sequence, read N- to C-terminus: MSNPTRGLQREITLRLGARLVQEGNRLHYLADRASITGKFSDIECRKLDETFPHFILQMESMLTTGELSPHHAHCVTLYHNDLTCEADTLGSCGYVYIAIYPTQR.

The protein belongs to the CbeA/YafW/YfjZ antitoxin family.

Functionally, antitoxin component of a type IV toxin-antitoxin (TA) system. Antitoxin that counteracts the effect of cognate toxin YkfI. It does not seem to bind to the cognate toxin but instead induces toxin loss by an unknown mechanism. Co-overexpression of toxin YkfI and antitoxin YafW leads to formation of elongated cells. This is Antitoxin YafW (yafW) from Escherichia coli (strain K12).